The chain runs to 788 residues: Cyclin-F (788 aa).

Residues 20–28 (KRRIRRRPR) carry the Nuclear localization signal 1 motif. The F-box domain occupies 29 to 76 (NLTILNLPEDALFHILKWLSVGDILAVRAVHSHLKYLVDNHASVWACA). The 115-residue stretch at 291–405 (HAVNKQRVFS…EVVSALDGKI (115 aa)) folds into the Cyclin N-terminal domain. 4 consecutive short sequence motifs (d box) follow at residues 310–313 (RYIL), 343–346 (RRRL), 349–352 (RYRL), and 351–354 (RLQL). 2 disordered regions span residues 566–585 (SARR…RGSF) and 700–788 (TSGY…FLKL). A Nuclear localization signal 2 motif is present at residues 568-574 (RRTKRKR). Residues 582–766 (RGSFVTTPTA…ESCAPQQQVK (185 aa)) are PEST. 2 stretches are compositionally biased toward polar residues: residues 700–716 (TSGY…DSGR) and 723–738 (RSTS…NTQP). The D box 5 signature appears at 767–770 (RKNL).

The protein belongs to the cyclin family. Cyclin AB subfamily. Component of the SCF(CCNF) complex consisting of CUL1, RBX1, SKP1 and CCNF. Interacts with SKP1. Interacts with CUL1. Interacts with CCNB1; interaction is required for nuclear localization of CCNB1. Interacts with CCP110; this interaction leads to CCP110 ubiquitination and degradation via the proteasome pathway. Interacts (via the Cyclin N-terminal domain) with MYBL2/BMYB. Interacts with FZR1/CDH1 (via N-terminus). Interacts with RRM2 (via Cy motif and when phosphorylated at 'Thr-33'); the interaction occurs exclusively in G2 and early M. Interacts with CDC6 (via Cy motif); the interaction takes place during G2 and M phase. Degraded when the spindle assembly checkpoint is activated during the G2-M transition. Degradation is not dependent on the proteasome or ubiquitin and depends on the C-terminal PEST sequence. In terms of processing, phosphorylated just before cells enter into mitosis. Post-translationally, ubiquitinated by the anaphase-promoting complex (APC/C); leading to its degradation by the proteasome.

Its subcellular location is the nucleus. The protein resides in the cytoplasm. It is found in the perinuclear region. It localises to the cytoskeleton. The protein localises to the microtubule organizing center. Its subcellular location is the centrosome. The protein resides in the centriole. Substrate recognition component of a SCF (SKP1-CUL1-F-box protein) E3 ubiquitin-protein ligase complex which mediates the ubiquitination and subsequent proteasomal degradation of target proteins. The SCF(CCNF) E3 ubiquitin-protein ligase complex is an integral component of the ubiquitin proteasome system (UPS) and links proteasome degradation to the cell cycle. Mediates the substrate recognition and the proteasomal degradation of various target proteins involved in the regulation of cell cycle progression and in the maintenance of genome stability. Mediates the ubiquitination and subsequent proteasomal degradation of CP110 during G2 phase, thereby acting as an inhibitor of centrosome reduplication. In G2, mediates the ubiquitination and proteasomal degradation of CDC6, thereby suppressing DNA re-replication and preventing genome instability. Involved in the ubiquitination and degradation of the substrate adapter CDH1 of the anaphase-promoting complex (APC/C), thereby acting as an antagonist of APC/C in regulating G1 progression and S phase entry. May play a role in the G2 cell cycle checkpoint control after DNA damage, possibly by promoting the ubiquitination of MYBL2/BMYB. The polypeptide is Cyclin-F (CCNF) (Bos taurus (Bovine)).